A 200-amino-acid polypeptide reads, in one-letter code: Small heat shock protein hspG2 (200 aa).

In terms of domain architecture, sHSP spans 33–200 (NKRIDIIPSM…DNFQIKLKSI (168 aa)). A disordered region spans residues 86–139 (KLQQQQQQQSEKSSQSTNNKDDDEPSIEEYEDDTKLKSNLNKNTENKDENKTTS). Positions 88 to 101 (QQQQQQQSEKSSQS) are enriched in low complexity. A compositionally biased stretch (acidic residues) spans 106-117 (DDDEPSIEEYED).

This sequence belongs to the small heat shock protein (HSP20) family.

This chain is Small heat shock protein hspG2 (hspG2), found in Dictyostelium discoideum (Social amoeba).